The sequence spans 142 residues: Glia maturation factor gamma (142 aa).

The residue at position 2 (S2) is an N-acetylserine. The region spanning 4–139 is the ADF-H domain; sequence SLVVCDVDPE…NETWLKEKLA (136 aa).

It belongs to the actin-binding proteins ADF family. GMF subfamily. In terms of tissue distribution, expressed in rat thymus, testis, and spleen. Is present predominantly in proliferative and differentiative organs.

The chain is Glia maturation factor gamma (Gmfg) from Rattus norvegicus (Rat).